The following is a 235-amino-acid chain: Small ribosomal subunit protein eS4 (235 aa).

The region spanning 38–101 is the S4 RNA-binding domain; the sequence is IPLLVLVRDF…EKSYRILFDE (64 aa).

Belongs to the eukaryotic ribosomal protein eS4 family.

In Archaeoglobus fulgidus (strain ATCC 49558 / DSM 4304 / JCM 9628 / NBRC 100126 / VC-16), this protein is Small ribosomal subunit protein eS4 (rps4e).